The following is a 503-amino-acid chain: Glycerol kinase (503 aa).

Residue threonine 14 participates in ADP binding. The ATP site is built by threonine 14, threonine 15, and serine 16. Threonine 14 serves as a coordination point for sn-glycerol 3-phosphate. ADP is bound at residue arginine 18. Residues arginine 84, glutamate 85, tyrosine 136, and aspartate 246 each contribute to the sn-glycerol 3-phosphate site. Glycerol is bound by residues arginine 84, glutamate 85, tyrosine 136, aspartate 246, and glutamine 247. Residues threonine 268 and glycine 311 each coordinate ADP. Threonine 268, glycine 311, glutamine 315, and glycine 412 together coordinate ATP. Residues glycine 412 and asparagine 416 each coordinate ADP. Positions 468–481 (ERTFSPDSDNEKRE) are enriched in basic and acidic residues. Residues 468 to 489 (ERTFSPDSDNEKRERRYKGWKK) are disordered.

The protein belongs to the FGGY kinase family.

The catalysed reaction is glycerol + ATP = sn-glycerol 3-phosphate + ADP + H(+). Its pathway is polyol metabolism; glycerol degradation via glycerol kinase pathway; sn-glycerol 3-phosphate from glycerol: step 1/1. Inhibited by fructose 1,6-bisphosphate (FBP). Functionally, key enzyme in the regulation of glycerol uptake and metabolism. Catalyzes the phosphorylation of glycerol to yield sn-glycerol 3-phosphate. This Haemophilus influenzae (strain ATCC 51907 / DSM 11121 / KW20 / Rd) protein is Glycerol kinase.